The chain runs to 360 residues: Phospho-N-acetylmuramoyl-pentapeptide-transferase (360 aa).

10 helical membrane passes run Val-18–Leu-38, Thr-73–Leu-93, Tyr-97–Tyr-117, Tyr-134–Leu-154, Val-168–Ser-188, Gly-199–Ser-219, Ala-236–Phe-256, Val-263–Leu-283, Ile-288–Val-308, and Val-338–Lys-358.

The protein belongs to the glycosyltransferase 4 family. MraY subfamily. Mg(2+) serves as cofactor.

The protein resides in the cell inner membrane. It carries out the reaction UDP-N-acetyl-alpha-D-muramoyl-L-alanyl-gamma-D-glutamyl-meso-2,6-diaminopimeloyl-D-alanyl-D-alanine + di-trans,octa-cis-undecaprenyl phosphate = di-trans,octa-cis-undecaprenyl diphospho-N-acetyl-alpha-D-muramoyl-L-alanyl-D-glutamyl-meso-2,6-diaminopimeloyl-D-alanyl-D-alanine + UMP. Its pathway is cell wall biogenesis; peptidoglycan biosynthesis. Catalyzes the initial step of the lipid cycle reactions in the biosynthesis of the cell wall peptidoglycan: transfers peptidoglycan precursor phospho-MurNAc-pentapeptide from UDP-MurNAc-pentapeptide onto the lipid carrier undecaprenyl phosphate, yielding undecaprenyl-pyrophosphoryl-MurNAc-pentapeptide, known as lipid I. This Shewanella denitrificans (strain OS217 / ATCC BAA-1090 / DSM 15013) protein is Phospho-N-acetylmuramoyl-pentapeptide-transferase.